The primary structure comprises 538 residues: Probable ribonuclease 3 (538 aa).

RNase III domains are found at residues 24–149 (IKSY…LNFG) and 238–381 (ASQM…EGYL). Residues 408-477 (LISQNIEVLH…NYKDLILQLY (70 aa)) form the DRBM domain.

The protein belongs to the ribonuclease III family.

The enzyme catalyses Endonucleolytic cleavage to 5'-phosphomonoester.. Its function is as follows. Digests double-stranded RNA. The protein is Probable ribonuclease 3 of Acanthamoeba polyphaga (Amoeba).